We begin with the raw amino-acid sequence, 333 residues long: Biotin synthase (333 aa).

The region spanning 54–287 (ANHGAIHACS…TKIIKFAAGR (234 aa)) is the Radical SAM core domain. [4Fe-4S] cluster-binding residues include Cys72, Cys76, and Cys79. Cys151, Cys212, and Lys282 together coordinate [2Fe-2S] cluster.

It belongs to the radical SAM superfamily. Biotin synthase family. Homodimer. The cofactor is [4Fe-4S] cluster. [2Fe-2S] cluster serves as cofactor.

It catalyses the reaction (4R,5S)-dethiobiotin + (sulfur carrier)-SH + 2 reduced [2Fe-2S]-[ferredoxin] + 2 S-adenosyl-L-methionine = (sulfur carrier)-H + biotin + 2 5'-deoxyadenosine + 2 L-methionine + 2 oxidized [2Fe-2S]-[ferredoxin]. Its pathway is cofactor biosynthesis; biotin biosynthesis; biotin from 7,8-diaminononanoate: step 2/2. Catalyzes the conversion of dethiobiotin (DTB) to biotin by the insertion of a sulfur atom into dethiobiotin via a radical-based mechanism. This chain is Biotin synthase, found in Chlorobaculum tepidum (strain ATCC 49652 / DSM 12025 / NBRC 103806 / TLS) (Chlorobium tepidum).